The chain runs to 429 residues: Threonine synthase (429 aa).

Lys-108 carries the N6-(pyridoxal phosphate)lysine modification.

Belongs to the threonine synthase family. Requires pyridoxal 5'-phosphate as cofactor.

It catalyses the reaction O-phospho-L-homoserine + H2O = L-threonine + phosphate. The protein operates within amino-acid biosynthesis; L-threonine biosynthesis; L-threonine from L-aspartate: step 5/5. Catalyzes the gamma-elimination of phosphate from L-phosphohomoserine and the beta-addition of water to produce L-threonine. The polypeptide is Threonine synthase (thrC) (Buchnera aphidicola subsp. Schizaphis graminum (strain Sg)).